The sequence spans 508 residues: Photosystem II CP47 reaction center protein (508 aa).

Transmembrane regions (helical) follow at residues 21-36 (AVHIMHTALVSGWAGS), 101-115 (IILSGLLFLAAIWHW), 140-156 (GIHLFLSGLLCFGFGAF), 203-218 (IAAGILGILAGLFHLS), 237-252 (VLSSSIAAVFWAAFVV), and 457-472 (NFALLFFFGHIWHGGR).

It belongs to the PsbB/PsbC family. PsbB subfamily. As to quaternary structure, PSII is composed of 1 copy each of membrane proteins PsbA, PsbB, PsbC, PsbD, PsbE, PsbF, PsbH, PsbI, PsbJ, PsbK, PsbL, PsbM, PsbT, PsbX, PsbY, PsbZ, Psb30/Ycf12, at least 3 peripheral proteins of the oxygen-evolving complex and a large number of cofactors. It forms dimeric complexes. Binds multiple chlorophylls. PSII binds additional chlorophylls, carotenoids and specific lipids. is required as a cofactor.

It is found in the plastid. The protein localises to the chloroplast thylakoid membrane. Functionally, one of the components of the core complex of photosystem II (PSII). It binds chlorophyll and helps catalyze the primary light-induced photochemical processes of PSII. PSII is a light-driven water:plastoquinone oxidoreductase, using light energy to abstract electrons from H(2)O, generating O(2) and a proton gradient subsequently used for ATP formation. This is Photosystem II CP47 reaction center protein from Chaetosphaeridium globosum (Charophycean green alga).